Here is a 435-residue protein sequence, read N- to C-terminus: Histidine--tRNA ligase (435 aa).

Belongs to the class-II aminoacyl-tRNA synthetase family. Homodimer.

It is found in the cytoplasm. It carries out the reaction tRNA(His) + L-histidine + ATP = L-histidyl-tRNA(His) + AMP + diphosphate + H(+). This is Histidine--tRNA ligase from Synechococcus sp. (strain ATCC 27144 / PCC 6301 / SAUG 1402/1) (Anacystis nidulans).